Consider the following 161-residue polypeptide: Ribosome maturation factor RimP (161 aa).

Belongs to the RimP family.

It is found in the cytoplasm. Functionally, required for maturation of 30S ribosomal subunits. The chain is Ribosome maturation factor RimP from Desulfosudis oleivorans (strain DSM 6200 / JCM 39069 / Hxd3) (Desulfococcus oleovorans).